A 121-amino-acid chain; its full sequence is Amelogenin (121 aa).

Positions 1 to 121 (LHHQIIPVLS…DLPLEPWPAS (121 aa)) are disordered. Composition is skewed to polar residues over residues 10-19 (SQHQTPTHAL) and 47-59 (HSVTPTQHHQSNL). The span at 60–84 (PQPGQQPFQPQFPQKPTHRPIQPQA) shows a compositional bias: low complexity. Residues 85-121 (PVHPMPPMPQPQLPPMFPLQPLPPLLPDLPLEPWPAS) show a composition bias toward pro residues.

The protein belongs to the amelogenin family.

The protein resides in the secreted. It is found in the extracellular space. It localises to the extracellular matrix. Plays a role in the biomineralization of teeth. Seems to regulate the formation of crystallites during the secretory stage of tooth enamel development. Thought to play a major role in the structural organization and mineralization of developing enamel. This Tachyglossus aculeatus aculeatus (Southeast Australian short-beaked echidna) protein is Amelogenin (AMEL).